The sequence spans 262 residues: 14-3-3-like protein B (262 aa).

The protein belongs to the 14-3-3 family.

The sequence is that of 14-3-3-like protein B from Hordeum vulgare (Barley).